Here is a 345-residue protein sequence, read N- to C-terminus: Phosphoribosylformylglycinamidine cyclo-ligase (345 aa).

Belongs to the AIR synthase family.

It localises to the cytoplasm. The catalysed reaction is 2-formamido-N(1)-(5-O-phospho-beta-D-ribosyl)acetamidine + ATP = 5-amino-1-(5-phospho-beta-D-ribosyl)imidazole + ADP + phosphate + H(+). The protein operates within purine metabolism; IMP biosynthesis via de novo pathway; 5-amino-1-(5-phospho-D-ribosyl)imidazole from N(2)-formyl-N(1)-(5-phospho-D-ribosyl)glycinamide: step 2/2. In Ligilactobacillus salivarius (strain UCC118) (Lactobacillus salivarius), this protein is Phosphoribosylformylglycinamidine cyclo-ligase.